We begin with the raw amino-acid sequence, 597 residues long: Centrosomal protein of 70 kDa (597 aa).

Residues 1-23 form a disordered region; that stretch reads MFPVAPKPQDSSQASDRLMTEKQ. Coiled coils occupy residues 66 to 179 and 254 to 326; these read MRQN…QMEV and TYKG…KKAE. A TPR repeat occupies 483 to 516; sequence NGVYPRMNEVYTRLGEMNNAVRNLQELLELDSSS.

As to quaternary structure, directly interacts with tubulin-gamma; this interaction determines centrosomal localization.

The protein resides in the cytoplasm. Its subcellular location is the cytoskeleton. The protein localises to the microtubule organizing center. It localises to the centrosome. Plays a role in the organization of both preexisting and nascent microtubules in interphase cells. During mitosis, required for the organization and orientation of the mitotic spindle. This is Centrosomal protein of 70 kDa (CEP70) from Pongo abelii (Sumatran orangutan).